Reading from the N-terminus, the 927-residue chain is Sodium/calcium exchanger 3 (927 aa).

An N-terminal signal peptide occupies residues 1-30 (MAWLRLQPLTSAFLHFGLVTFVLFLNGLRA). Over 31 to 73 (EAGDLRDVPSAGQNNESCSGSSDCKEGVILPIWYPENPSLGDK) the chain is Extracellular. N-linked (GlcNAc...) asparagine glycosylation is present at asparagine 45. The chain crosses the membrane as a helical span at residues 74 to 94 (IARVIVYFVALIYMFLGVSII). Over 95–147 (ADRFMASIEVITSQEREVTIKKPNGETSTTTIRVWNETVSNLTLMALGSSAPE) the chain is Cytoplasmic. The Alpha-1 repeat unit spans residues 140–180 (ALGSSAPEILLSLIEVCGHGFIAGDLGPSTIVGSAAFNMFI). Residues 148-168 (ILLSLIEVCGHGFIAGDLGPS) traverse the membrane as a helical segment. Position 169 (threonine 169) is a topological domain, extracellular. The helical transmembrane segment at 170–190 (IVGSAAFNMFIIIGICVYVIP) threads the bilayer. Residues 191–202 (DGETRKIKHLRV) are Cytoplasmic-facing. The chain crosses the membrane as a helical span at residues 203–223 (FFVTAAWSVFAYIWLYMILAV). At 224–230 (FSPGVVQ) the chain is on the extracellular side. Residues 231–251 (VWEGLLTLFFFPVCVLLAWVA) form a helical membrane-spanning segment. Residues 252-726 (DKRLLFYKYM…DESGEERLPS (475 aa)) lie on the Cytoplasmic side of the membrane. Residues 253-272 (KRLLFYKYMHKRYRTDKHRG) form a putative calmodulin-binding region region. 2 Calx-beta domains span residues 386–485 (VHTD…VRLS) and 519–619 (ATVT…IALG). Ca(2+) is bound by residues glutamate 409, aspartate 445, aspartate 470, aspartate 471, isoleucine 473, glutamate 475, glutamate 478, aspartate 525, aspartate 526, aspartate 527, glutamate 543, aspartate 579, glutamate 606, glutamate 607, and glutamate 672. Residues 727 to 747 (CFDYVMHFLTVFWKVLFACVP) traverse the membrane as a helical segment. Residues 748–754 (PTEYCHG) lie on the Extracellular side of the membrane. Residues 755–775 (WACFVVSILIIGMLTAIIGDL) form a helical membrane-spanning segment. Topologically, residues 776 to 778 (ASH) are cytoplasmic. The helical transmembrane segment at 779–799 (FGCTIGLKDSVTAVVFVAFGT) threads the bilayer. One copy of the Alpha-2 repeat lies at 796-832 (AFGTSVPDTFASKAAALQDVYADASIGNVTGSNAVNV). Residues 800–828 (SVPDTFASKAAALQDVYADASIGNVTGSN) lie on the Extracellular side of the membrane. An N-linked (GlcNAc...) asparagine glycan is attached at asparagine 823. Residues 829-849 (AVNVFLGIGLAWSVAAIYWAM) traverse the membrane as a helical segment. The Cytoplasmic portion of the chain corresponds to 850 to 860 (QGQEFHVSAGT). The chain crosses the membrane as a helical span at residues 861–881 (LAFSVTLFTIFAFVCLSVLLY). Topologically, residues 882–903 (RRRPHLGGELGGPRGCKLATTW) are extracellular. The chain crosses the membrane as a helical span at residues 904–924 (LFVSLWLLYVLFATLEAYCYI). Over 925 to 927 (KGF) the chain is Cytoplasmic.

It belongs to the Ca(2+):cation antiporter (CaCA) (TC 2.A.19) family. SLC8 subfamily. Interacts with AKAP1. In terms of tissue distribution, detected in neurons in brain cortex and hippocampus. Detected in pyramidal cell bodies and processes, in granule cells and interneurons in the CA1 and CA3 region of the hippocampus. Detected on astrocyte processes in brain cortex. Detected on endothelial cells in hippocampus capillaries (at protein level). Restricted to brain and skeletal muscle.

Its subcellular location is the cell membrane. The protein resides in the perikaryon. It localises to the cell projection. It is found in the dendrite. The protein localises to the dendritic spine. Its subcellular location is the sarcolemma. The protein resides in the cytoplasm. It localises to the sarcoplasm. It is found in the cell junction. The protein localises to the mitochondrion outer membrane. Its subcellular location is the endoplasmic reticulum membrane. The protein resides in the perinuclear region. It carries out the reaction Ca(2+)(in) + 3 Na(+)(out) = Ca(2+)(out) + 3 Na(+)(in). With respect to regulation, calcium transport is down-regulated by Na(+) and stimulated by Ca(2+). Its function is as follows. Mediates the electrogenic exchange of Ca(2+) against Na(+) ions across the cell membrane, and thereby contributes to the regulation of cytoplasmic Ca(2+) levels and Ca(2+)-dependent cellular processes. Contributes to cellular Ca(2+) homeostasis in excitable cells, both in muscle and in brain. In a first phase, voltage-gated channels mediate the rapid increase of cytoplasmic Ca(2+) levels due to release of Ca(2+) stores from the endoplasmic reticulum. SLC8A3 mediates the export of Ca(2+) from the cell during the next phase, so that cytoplasmic Ca(2+) levels rapidly return to baseline. Contributes to Ca(2+) transport during excitation-contraction coupling in muscle. In neurons, contributes to the rapid decrease of cytoplasmic Ca(2+) levels back to baseline after neuronal activation, and thereby contributes to modulate synaptic plasticity, learning and memory. Required for normal oligodendrocyte differentiation and for normal myelination. Mediates Ca(2+) efflux from mitochondria and contributes to mitochondrial Ca(2+) ion homeostasis. The polypeptide is Sodium/calcium exchanger 3 (Slc8a3) (Rattus norvegicus (Rat)).